Reading from the N-terminus, the 102-residue chain is Small ribosomal subunit protein uS10 (102 aa).

It belongs to the universal ribosomal protein uS10 family. In terms of assembly, part of the 30S ribosomal subunit.

Involved in the binding of tRNA to the ribosomes. This is Small ribosomal subunit protein uS10 from Clostridium kluyveri (strain NBRC 12016).